A 254-amino-acid polypeptide reads, in one-letter code: Tubulin-specific chaperone B (254 aa).

Positions 182-225 constitute a CAP-Gly domain; the sequence is PLPLDVMGTWCGVEFPEAAGKNDGRINGVTLFGPVAPGHGSFVR. The interval 234–254 is disordered; the sequence is KDEESAEVEDVHDDVESDDEI. Positions 237-254 are enriched in acidic residues; the sequence is ESAEVEDVHDDVESDDEI.

Belongs to the TBCB family. Binds to monomeric alpha-tubulin.

It is found in the cytoplasm. Its subcellular location is the cytoskeleton. In terms of biological role, acts to sequester alpha-tubulin from interaction with beta-tubulin, raising the possibility that it plays a regulatory role in the formation of the tubulin heterodimer. This chain is Tubulin-specific chaperone B (ALF1), found in Saccharomyces cerevisiae (strain ATCC 204508 / S288c) (Baker's yeast).